A 195-amino-acid chain; its full sequence is Keratin-associated protein 4-3 (195 aa).

28 repeat units span residues 34-38 (CCRTT), 39-43 (CCRPS), 44-48 (CCISS), 49-53 (CCRPS), 54-58 (CCISS), 59-63 (CCKPS), 64-68 (CCRTT), 69-73 (CCRPS), 74-78 (CCISS), 79-83 (CCRPS), 84-88 (CCISS), 89-93 (CCKPS), 94-98 (CCRTT), 99-103 (CCRPS), 104-108 (CCISS), 109-113 (CCRPS), 114-118 (CCISS), 119-123 (CCKPS), 124-128 (CCQTT), 129-133 (CCRPS), 134-138 (CCISS), 144-148 (CCQPS), 149-153 (CCRPA), 154-158 (CCISS), 159-163 (CCHPS), 164-168 (CCVSS), 179-183 (CCRTT), and 189-193 (CCGSS). A 29 X 5 AA repeats of C-C-[GIKRQVH]-[SPT]-[STA] region spans residues 34–193 (CCRTTCCRPS…CFHPICCGSS (160 aa)).

It belongs to the KRTAP type 4 family. As to quaternary structure, interacts with hair keratins. In terms of tissue distribution, expressed specifically in the middle/uper portions of the hair cortex. Not detected in the hair matrix or cuticle.

Its function is as follows. In the hair cortex, hair keratin intermediate filaments are embedded in an interfilamentous matrix, consisting of hair keratin-associated proteins (KRTAP), which are essential for the formation of a rigid and resistant hair shaft through their extensive disulfide bond cross-linking with abundant cysteine residues of hair keratins. The matrix proteins include the high-sulfur and high-glycine-tyrosine keratins. In Homo sapiens (Human), this protein is Keratin-associated protein 4-3 (KRTAP4-3).